The sequence spans 255 residues: Myb-related protein Zm38 (255 aa).

2 consecutive HTH myb-type domains span residues 9–61 and 62–116; these read KAHT…INYL and RPDL…RRKL. 2 consecutive DNA-binding regions (H-T-H motif) follow at residues 37–61 and 89–112; these read WRSL…INYL and WSLI…NTHV.

The protein localises to the nucleus. In terms of biological role, transcription factor that negatively regulates genes involved in anthocyanin biosynthesis. The protein is Myb-related protein Zm38 of Zea mays (Maize).